A 117-amino-acid chain; its full sequence is Large ribosomal subunit protein uL18 (117 aa).

Belongs to the universal ribosomal protein uL18 family. Part of the 50S ribosomal subunit; part of the 5S rRNA/L5/L18/L25 subcomplex. Contacts the 5S and 23S rRNAs.

Its function is as follows. This is one of the proteins that bind and probably mediate the attachment of the 5S RNA into the large ribosomal subunit, where it forms part of the central protuberance. This is Large ribosomal subunit protein uL18 from Mycoplasma mobile (strain ATCC 43663 / 163K / NCTC 11711) (Mesomycoplasma mobile).